We begin with the raw amino-acid sequence, 254 residues long: 4-hydroxy-tetrahydrodipicolinate reductase (254 aa).

7-12 (GASGRI) lines the NAD(+) pocket. NADP(+) is bound at residue Arg35. NAD(+) contacts are provided by residues 91 to 93 (GTT) and 115 to 118 (AHNM). Residue His147 is the Proton donor/acceptor of the active site. His148 contacts (S)-2,3,4,5-tetrahydrodipicolinate. Lys151 acts as the Proton donor in catalysis. Residue 157-158 (GT) participates in (S)-2,3,4,5-tetrahydrodipicolinate binding.

This sequence belongs to the DapB family.

It localises to the cytoplasm. The catalysed reaction is (S)-2,3,4,5-tetrahydrodipicolinate + NAD(+) + H2O = (2S,4S)-4-hydroxy-2,3,4,5-tetrahydrodipicolinate + NADH + H(+). The enzyme catalyses (S)-2,3,4,5-tetrahydrodipicolinate + NADP(+) + H2O = (2S,4S)-4-hydroxy-2,3,4,5-tetrahydrodipicolinate + NADPH + H(+). The protein operates within amino-acid biosynthesis; L-lysine biosynthesis via DAP pathway; (S)-tetrahydrodipicolinate from L-aspartate: step 4/4. Its function is as follows. Catalyzes the conversion of 4-hydroxy-tetrahydrodipicolinate (HTPA) to tetrahydrodipicolinate. This chain is 4-hydroxy-tetrahydrodipicolinate reductase, found in Helicobacter pylori (strain G27).